The following is a 706-amino-acid chain: Sodium- and chloride-dependent glycine transporter 1 (706 aa).

The interval 1-26 (MSGGDTRAAIARPRMAAAHGPVAPSS) is disordered. The Cytoplasmic portion of the chain corresponds to 1–108 (MSGGDTRAAI…KRGNWGNQIE (108 aa)). The span at 7–18 (RAAIARPRMAAA) shows a compositional bias: low complexity. The next 3 helical transmembrane spans lie at 109-129 (FVLT…FPYL), 136-156 (GAFM…LFFM), and 188-208 (VSTY…YYFF). Over 209-285 (SSMTHVLPWA…LSDDIGNFGE (77 aa)) the chain is Extracellular. Helical transmembrane passes span 286 to 306 (VRLP…LCLI), 315 to 335 (VVYF…VRGV), 360 to 380 (VWGD…GGLI), 407 to 427 (SVYA…HLGV), 450 to 470 (LLPI…LLGL), 506 to 526 (VAGF…WLLL), 530 to 550 (YAAS…IMYI), 570 to 590 (LFFQ…ILVF), and 610 to 630 (VAIG…YAMF). Residues 631–706 (RLCRTDGDTL…GSSRLQDSRI (76 aa)) lie on the Cytoplasmic side of the membrane. Serine 673 and serine 698 each carry phosphoserine. The tract at residues 695 to 706 (SNGSSRLQDSRI) is essential for interaction with EXOC1.

The protein belongs to the sodium:neurotransmitter symporter (SNF) (TC 2.A.22) family. SLC6A9 subfamily. As to quaternary structure, interacts with EXOC1; interaction increases the transporter capacity of SLC6A9 probably by promoting its insertion into the cell membrane. Interacts with EXOC3 and EXOC4. In terms of tissue distribution, expressed in the brain, kidney, pancreas, lung, placenta and liver. Expressed only in the brain.

It localises to the cell membrane. It carries out the reaction glycine(out) + chloride(out) + 2 Na(+)(out) = glycine(in) + chloride(in) + 2 Na(+)(in). Its activity is regulated as follows. Inhibited by sarcosine. Its function is as follows. Sodium- and chloride-dependent glycine transporter. Essential for regulating glycine concentrations at inhibitory glycinergic synapses. In terms of biological role, sodium- and chloride-dependent glycine transporter. This Homo sapiens (Human) protein is Sodium- and chloride-dependent glycine transporter 1 (SLC6A9).